The following is a 408-amino-acid chain: Probable E3 ubiquitin-protein ligase makorin-1 (408 aa).

C3H1-type zinc fingers lie at residues 34 to 61 and 63 to 90; these read WTRH…HDLA and SRSA…HNKP. Disordered stretches follow at residues 90–114 and 154–173; these read PLQE…SGNI and EAYT…PADP. Residues 162–173 show a composition bias toward basic and acidic residues; the sequence is KPDEGREEPADP. Residues 174–201 form a C3H1-type 3 zinc finger; that stretch reads ELKKQLCPYAAMGECRYGENCVYLHGDP. Residues 202-229 form a makorin-type Cys-His region; the sequence is CDMCGLQVLHPVDTCQRSQHIKSCIEAH. The segment at 247-301 adopts an RING-type zinc-finger fold; it reads CGICMEVVYEKTNPSERRFGILSNCSHSYCLKCIRKWRSAKQFESKIIKSCPECR. The C3H1-type 4 zinc-finger motif lies at 330–359; it reads AMSSKSCRYFDEGRGTCPFGGNCFYRHAYP. The disordered stretch occupies residues 363–408; the sequence is IEEPQPRQKSGMSSRYRIPSPSAGIDFGSLTSERAETRLRTRKTKL.

The enzyme catalyses S-ubiquitinyl-[E2 ubiquitin-conjugating enzyme]-L-cysteine + [acceptor protein]-L-lysine = [E2 ubiquitin-conjugating enzyme]-L-cysteine + N(6)-ubiquitinyl-[acceptor protein]-L-lysine.. The protein operates within protein modification; protein ubiquitination. E3 ubiquitin ligase catalyzing the covalent attachment of ubiquitin moieties onto substrate proteins. The sequence is that of Probable E3 ubiquitin-protein ligase makorin-1 (mkrn1) from Xenopus laevis (African clawed frog).